Here is a 261-residue protein sequence, read N- to C-terminus: Phosphonates import ATP-binding protein PhnC (261 aa).

The 246-residue stretch at 8–253 (LRVENLSKTY…WFRRIYGEGA (246 aa)) folds into the ABC transporter domain. ATP is bound at residue 41–48 (GLSGSGKS).

Belongs to the ABC transporter superfamily. Phosphonates importer (TC 3.A.1.9.1) family. The complex is composed of two ATP-binding proteins (PhnC), two transmembrane proteins (PhnE) and a solute-binding protein (PhnD).

Its subcellular location is the cell inner membrane. The catalysed reaction is phosphonate(out) + ATP + H2O = phosphonate(in) + ADP + phosphate + H(+). In terms of biological role, part of the ABC transporter complex PhnCDE involved in phosphonates import. Responsible for energy coupling to the transport system. This Bdellovibrio bacteriovorus (strain ATCC 15356 / DSM 50701 / NCIMB 9529 / HD100) protein is Phosphonates import ATP-binding protein PhnC.